A 122-amino-acid chain; its full sequence is Large ribosomal subunit protein uL14 (122 aa).

Belongs to the universal ribosomal protein uL14 family. As to quaternary structure, part of the 50S ribosomal subunit. Forms a cluster with proteins L3 and L19. In the 70S ribosome, L14 and L19 interact and together make contacts with the 16S rRNA in bridges B5 and B8.

Functionally, binds to 23S rRNA. Forms part of two intersubunit bridges in the 70S ribosome. The polypeptide is Large ribosomal subunit protein uL14 (Marinomonas sp. (strain MWYL1)).